Reading from the N-terminus, the 546-residue chain is Phosphomethylpyrimidine synthase (546 aa).

Residues N145, M174, Y203, H239, 259–261, 300–303, and E339 each bind substrate; these read SRG and DGLR. H343 contributes to the Zn(2+) binding site. Y366 is a substrate binding site. H407 serves as a coordination point for Zn(2+). Positions 487, 490, and 495 each coordinate [4Fe-4S] cluster.

The protein belongs to the ThiC family. The cofactor is [4Fe-4S] cluster.

It carries out the reaction 5-amino-1-(5-phospho-beta-D-ribosyl)imidazole + S-adenosyl-L-methionine = 4-amino-2-methyl-5-(phosphooxymethyl)pyrimidine + CO + 5'-deoxyadenosine + formate + L-methionine + 3 H(+). Its pathway is cofactor biosynthesis; thiamine diphosphate biosynthesis. Functionally, catalyzes the synthesis of the hydroxymethylpyrimidine phosphate (HMP-P) moiety of thiamine from aminoimidazole ribotide (AIR) in a radical S-adenosyl-L-methionine (SAM)-dependent reaction. This chain is Phosphomethylpyrimidine synthase, found in Mycobacterium ulcerans (strain Agy99).